Reading from the N-terminus, the 219-residue chain is Chloramphenicol acetyltransferase (219 aa).

Histidine 193 (proton acceptor) is an active-site residue.

The protein belongs to the chloramphenicol acetyltransferase family. As to quaternary structure, homotrimer.

The catalysed reaction is chloramphenicol + acetyl-CoA = chloramphenicol 3-acetate + CoA. In terms of biological role, this enzyme is an effector of chloramphenicol resistance in bacteria. The sequence is that of Chloramphenicol acetyltransferase (cat) from Klebsiella sp.